Here is a 287-residue protein sequence, read N- to C-terminus: Nucleotide-binding protein HEAR2885 (287 aa).

8–15 (GISGSGKS) is a binding site for ATP. GTP is bound at residue 57–60 (DVRS).

This sequence belongs to the RapZ-like family.

Functionally, displays ATPase and GTPase activities. This is Nucleotide-binding protein HEAR2885 from Herminiimonas arsenicoxydans.